The sequence spans 84 residues: Cell division topological specificity factor (84 aa).

It belongs to the MinE family.

Prevents the cell division inhibition by proteins MinC and MinD at internal division sites while permitting inhibition at polar sites. This ensures cell division at the proper site by restricting the formation of a division septum at the midpoint of the long axis of the cell. This chain is Cell division topological specificity factor, found in Ralstonia pickettii (strain 12J).